We begin with the raw amino-acid sequence, 21 residues long: Paulistine (21 aa).

A disulfide bond links cysteine 7 and cysteine 14. Threonine 21 is modified (threonine amide).

Belongs to the sylv/frat/paul family. In terms of processing, occurs in oxidized and reduced states which are thought to adopt a compact globular and linear structure, respectively.

Functionally, induces transient hyperalgesia and paw edema in mice. Probably exerts its effects via different pathways in an oxidation state-dependent way. The protein is Paulistine of Polybia paulista (Neotropical social wasp).